The sequence spans 228 residues: Isonitrile hydratase (228 aa).

Cys101 is an active-site residue.

In terms of assembly, homodimer.

It carries out the reaction N-cyclohexylformamide = cyclohexyl isocyanide + H2O. Its activity is regulated as follows. Sensitive to thiol reagents and oxidizing reagents, but is not influenced by chelators or reducing reagents. Functionally, catalyzes the hydration of cyclohexyl isocyanide to N-cyclohexylformamide. Acts on various isonitriles, but not on nitriles or amides. Probably involved in detoxification. This Pseudomonas putida (Arthrobacter siderocapsulatus) protein is Isonitrile hydratase (inhA).